The primary structure comprises 305 residues: MNSKFYHRSRLFLTFGEASEIWLSTLSPLTRKNYASGIKFLVSLKVLDLTKTLDNAISFDHSESLFKIKSLTIFNGKPVSEASKQARAACYISFTKFLYRLTKGYINPAIPLKDFGNTTFFKIRDRVKTVSISKKEWTVFFEALRLVSYRDYLIGKLIVQGIRKLDEILSLCMEDLFFASNQISFRIKKRQNKEINIPITFPFSLMKELKDYVGGRNGRVFISEDGSPIATSQVVHNFKIAALRSAMTTKITPRVLRASALIHLKQMGLRDEEIMRVSCLSSKQSLCSYVCSGGNSSVANIPTIL.

The region spanning 13 to 99 (LTFGEASEIW…CYISFTKFLY (87 aa)) is the Core-binding (CB) domain. Residues 127 to 303 (VKTVSISKKE…GNSSVANIPT (177 aa)) enclose the Tyr recombinase domain. Residues lysine 188 and arginine 257 contribute to the active site. Tyrosine 289 (O-(3'-phospho-DNA)-tyrosine intermediate) is an active-site residue.

Belongs to the 'phage' integrase family.

The chain is Virulence plasmid integrase pGP7-D from Chlamydia muridarum (strain MoPn / Nigg).